Here is a 629-residue protein sequence, read N- to C-terminus: Phosphomethylpyrimidine synthase (629 aa).

Residues 1–21 form a disordered region; the sequence is MSIKAKNAAHLRESAQVDSGS. Residues Asn233, Met262, Tyr291, His327, 347 to 349, 388 to 391, and Glu427 contribute to the substrate site; these read SRG and DGLR. His431 is a Zn(2+) binding site. Residue Tyr454 participates in substrate binding. His495 contacts Zn(2+). Residues Cys575, Cys578, and Cys583 each contribute to the [4Fe-4S] cluster site.

It belongs to the ThiC family. Homodimer. The cofactor is [4Fe-4S] cluster.

The enzyme catalyses 5-amino-1-(5-phospho-beta-D-ribosyl)imidazole + S-adenosyl-L-methionine = 4-amino-2-methyl-5-(phosphooxymethyl)pyrimidine + CO + 5'-deoxyadenosine + formate + L-methionine + 3 H(+). The protein operates within cofactor biosynthesis; thiamine diphosphate biosynthesis. In terms of biological role, catalyzes the synthesis of the hydroxymethylpyrimidine phosphate (HMP-P) moiety of thiamine from aminoimidazole ribotide (AIR) in a radical S-adenosyl-L-methionine (SAM)-dependent reaction. The sequence is that of Phosphomethylpyrimidine synthase from Pseudomonas syringae pv. syringae (strain B728a).